Here is a 213-residue protein sequence, read N- to C-terminus: Golgi apparatus membrane protein TVP23 homolog A (213 aa).

4 consecutive transmembrane segments (helical) span residues Pro32–Cys52, Trp54–Phe74, Ile123–Leu143, and Trp150–Leu170.

Belongs to the TVP23 family.

It is found in the membrane. This is Golgi apparatus membrane protein TVP23 homolog A (TVP23A) from Homo sapiens (Human).